The chain runs to 371 residues: GPI mannosyltransferase 1 (371 aa).

The next 8 helical transmembrane spans lie at 64 to 84 (FPSWGKYLFSISDLIAGWLMI), 120 to 140 (AILGILSIALLYLIEKKSVWL), 144 to 164 (ILGFSVHFKIYPFMYGIAFLV), 190 to 210 (IVVGSLFMFTICNLLMYYLYG), 248 to 268 (ASSLFAFLPQLSLCMLIPLVF), 290 to 310 (VCTSQYFMWYLVFLPLVLPNS), 318 to 338 (LICLSLWIIGQLLWLISAYNL), and 344 to 364 (SVFIPLWLSGLLFFFFNVYEL).

Belongs to the PIGM family.

It localises to the endoplasmic reticulum membrane. It functions in the pathway glycolipid biosynthesis; glycosylphosphatidylinositol-anchor biosynthesis. Mannosyltransferase involved in glycosylphosphatidylinositol-anchor biosynthesis. Transfers the first alpha-1,4-mannose to GlcN-acyl-PI during GPI precursor assembly. Required for cell wall integrity. The sequence is that of GPI mannosyltransferase 1 (gpi14) from Schizosaccharomyces pombe (strain 972 / ATCC 24843) (Fission yeast).